Consider the following 60-residue polypeptide: MAVPRRKTSPSRRGMRRSADAIKKPTYVEDKDSGELRRPHHLDLKTGMYKGRQVLKKKDA.

A compositionally biased stretch (basic residues) spans 1–16 (MAVPRRKTSPSRRGMR). The interval 1 to 60 (MAVPRRKTSPSRRGMRRSADAIKKPTYVEDKDSGELRRPHHLDLKTGMYKGRQVLKKKDA) is disordered. The span at 17-44 (RSADAIKKPTYVEDKDSGELRRPHHLDL) shows a compositional bias: basic and acidic residues.

The protein belongs to the bacterial ribosomal protein bL32 family.

The protein is Large ribosomal subunit protein bL32 of Bradyrhizobium sp. (strain BTAi1 / ATCC BAA-1182).